Reading from the N-terminus, the 338-residue chain is Methionyl-tRNA formyltransferase (338 aa).

110-113 (SLLP) lines the (6S)-5,6,7,8-tetrahydrofolate pocket.

It belongs to the Fmt family.

The enzyme catalyses L-methionyl-tRNA(fMet) + (6R)-10-formyltetrahydrofolate = N-formyl-L-methionyl-tRNA(fMet) + (6S)-5,6,7,8-tetrahydrofolate + H(+). Its function is as follows. Attaches a formyl group to the free amino group of methionyl-tRNA(fMet). The formyl group appears to play a dual role in the initiator identity of N-formylmethionyl-tRNA by promoting its recognition by IF2 and preventing the misappropriation of this tRNA by the elongation apparatus. The polypeptide is Methionyl-tRNA formyltransferase (Synechococcus sp. (strain CC9605)).